The following is a 513-amino-acid chain: Probable E3 ubiquitin-protein ligase XBOS34 (513 aa).

ANK repeat units follow at residues 39 to 69, 75 to 104, and 108 to 137; these read EGKTPLMVASMRPDLINVVQVLIELGANVNA, YCGTALHHAAKKGLEQTVHLLLSHGANPFI, and DCHTALDLAREKGHVNVVRAIEGRISLFCG. Polar residues-rich tracts occupy residues 309–327 and 335–355; these read ITTTTATNDWGNPPSNSLN and SAPSKTSGQVPVVTSSSSTYN. Disordered stretches follow at residues 309 to 378 and 423 to 455; these read ITTT…QNST and SADGGTAVSSAKPAENEGDAKPAESDANASNSG. Over residues 361–378 the composition is skewed to low complexity; it reads GTSSGQSSSKHNKSQNST. The segment covering 436-446 has biased composition (basic and acidic residues); the sequence is AENEGDAKPAE. The segment at 462 to 501 adopts an RING-type zinc-finger fold; it reads CVICLDAPVEGACIPCGHMAGCMSCLKDIESKKWGCPICR.

It catalyses the reaction S-ubiquitinyl-[E2 ubiquitin-conjugating enzyme]-L-cysteine + [acceptor protein]-L-lysine = [E2 ubiquitin-conjugating enzyme]-L-cysteine + N(6)-ubiquitinyl-[acceptor protein]-L-lysine.. The protein operates within protein modification; protein ubiquitination. This is Probable E3 ubiquitin-protein ligase XBOS34 (XBOS34) from Oryza sativa subsp. japonica (Rice).